Reading from the N-terminus, the 810-residue chain is Volume-regulated anion channel subunit LRRC8A (810 aa).

An N-acetylmethionine modification is found at Met1. Residues 1 to 23 (MIPVTELRYFADTQPAYRILKPW) are Cytoplasmic-facing. Residues 24-47 (WDVFTDYISIVMLMIAVFGGTLQV) traverse the membrane as a helical segment. Residues 48–123 (TQDKMICLPC…YENRLHWFAK (76 aa)) are Extracellular-facing. 3 cysteine pairs are disulfide-bonded: Cys54/Cys310, Cys57/Cys65, and Cys113/Cys295. Asn66 and Asn83 each carry an N-linked (GlcNAc...) asparagine glycan. The chain crosses the membrane as a helical span at residues 124 to 142 (YFPYLVLLHTLIFLACSNF). The Cytoplasmic segment spans residues 143 to 264 (WFKFPRTSSK…EEGDIVYRLY (122 aa)). Residue Thr200 is modified to Phosphothreonine. Ser202 is modified (phosphoserine). Thr215 bears the Phosphothreonine mark. The residue at position 217 (Ser217) is a Phosphoserine. The chain crosses the membrane as a helical span at residues 265–286 (MRQTIIKVIKFILIICYTVYYV). At 287–316 (HNIKFDVDCTVDIESLTGYRTYRCAHPLAT) the chain is on the extracellular side. The chain crosses the membrane as a helical span at residues 317 to 341 (LFKILASFYISLVIFYGLICMYTLW). Residues 342–810 (WMLRRSLKKY…RLWRADKEQA (469 aa)) lie on the Cytoplasmic side of the membrane. LRR repeat units lie at residues 399 to 422 (ENKL…RLTK), 423 to 445 (NAQD…VFDL), 447 to 468 (ELEV…IAQL), 469 to 492 (TGLK…AFLR), 493 to 515 (ENLR…IYSL), 518 to 542 (LEEL…GLRE), 543 to 565 (LKRL…VTDV), 567 to 589 (VHLQ…SLKK), 590 to 613 (MANL…IFSL), 615 to 637 (NLQE…SFQH), 639 to 661 (HRLT…IGNL), 662 to 684 (TNLE…LFYC), 686 to 707 (KLRY…IGLL), 708 to 730 (QNLQ…LFQC), 732 to 753 (KLRA…VGEL), 754 to 776 (TNLT…LGEC), and 778 to 801 (LLKR…VKER). The short motif at 706–707 (LL) is the Di-leucine motif element.

The protein belongs to the LRRC8 family. As to quaternary structure, heterohexamer; oligomerizes with other LRRC8 proteins (LRRC8B, LRRC8C, LRRC8D and/or LRRC8E) to form a heterohexamer. Can form homohexamers in vitro, but these have lower conductance than heterohexamers. In vivo, the subunit composition may depend primarily on expression levels, and heterooligomeric channels containing various proportions of the different LRRC8 proteins may coexist. Interact with GRB2. Interacts with NOX4; this interaction prevents the ubiquitin-mediated degradation of LRRC8A. N-glycosylated. Expressed in brain, kidney, ovary, lung, liver, heart, and fetal brain and liver. Found at high levels in bone marrow; lower levels are detected in peripheral blood cells. Expressed on T-cells as well as on B-lineage cells.

It localises to the cell membrane. It is found in the lysosome membrane. The enzyme catalyses chloride(in) = chloride(out). It catalyses the reaction iodide(out) = iodide(in). It carries out the reaction taurine(out) = taurine(in). The catalysed reaction is L-aspartate(out) = L-aspartate(in). The enzyme catalyses L-glutamate(out) = L-glutamate(in). It catalyses the reaction myo-inositol(out) = myo-inositol(in). It carries out the reaction 2',3'-cGAMP(out) = 2',3'-cGAMP(in). With respect to regulation, inhibited by (4-[(2-butyl-6,7-dichloro-2-cyclopentyl-2,3-dihydro-1-oxo-1H-inden-5-yl)oxy]butanoic acid), which plugs the channel like a cork in a bottle by binding in the extracellular selectivity filter and sterically occluding ion conduction. Lipids may block conduction in closed heterohexameric channels. In terms of biological role, essential component of the volume-regulated anion channel (VRAC, also named VSOAC channel), an anion channel required to maintain a constant cell volume in response to extracellular or intracellular osmotic changes. The VRAC channel conducts iodide better than chloride and can also conduct organic osmolytes like taurine. Mediates efflux of amino acids, such as aspartate and glutamate, in response to osmotic stress. LRRC8A and LRRC8D are required for the uptake of the drug cisplatin. In complex with LRRC8C or LRRC8E, acts as a transporter of immunoreactive cyclic dinucleotide GMP-AMP (2'-3'-cGAMP), an immune messenger produced in response to DNA virus in the cytosol: mediates both import and export of 2'-3'-cGAMP, thereby promoting transfer of 2'-3'-cGAMP to bystander cells. In contrast, complexes containing LRRC8D inhibit transport of 2'-3'-cGAMP. Required for in vivo channel activity, together with at least one other family member (LRRC8B, LRRC8C, LRRC8D or LRRC8E); channel characteristics depend on the precise subunit composition. Can form functional channels by itself (in vitro). Involved in B-cell development: required for the pro-B cell to pre-B cell transition. Also required for T-cell development. Required for myoblast differentiation: VRAC activity promotes membrane hyperpolarization and regulates insulin-stimulated glucose metabolism and oxygen consumption. Also acts as a regulator of glucose-sensing in pancreatic beta cells: VRAC currents, generated in response to hypotonicity- or glucose-induced beta cell swelling, depolarize cells, thereby causing electrical excitation, leading to increase glucose sensitivity and insulin secretion. Also plays a role in lysosome homeostasis by forming functional lysosomal VRAC channels in response to low cytoplasmic ionic strength condition: lysosomal VRAC channels are necessary for the formation of large lysosome-derived vacuoles, which store and then expel excess water to maintain cytosolic water homeostasis. Acts as a key factor in NLRP3 inflammasome activation by modulating itaconate efflux and mitochondria function. The chain is Volume-regulated anion channel subunit LRRC8A from Homo sapiens (Human).